The primary structure comprises 375 residues: MGGGGRGRTSQKPLMERVSVDPPFTVSDLKQAIPPHCFKRSVIRSSYYIVHDAIIAYIFYFLADKYIPILPAPLAYLAWPLYWFCQASILTGLWVIGHECGHHAFSDYQWVDDTVGFILHSFLMTPYFSWKYSHRNHHANTNSLDNDEVYIPKSKAKVALYYKVLNHPPGRLLIMFITFTLGFPLYLFTNISGKKYERFANHFDPMSPIFKERERFQVLLSDLGLLAVLYGVKLAVAAKGAAWVTCIYGIPVLGVFIFFDIITYLHHTHLSLPHYDSSEWNWLRGALSTIDRDFGFLNSVLHDVTHTHVMHHLFSYIPHYHAKEARDAINTVLGDFYKIDRTPILKAMWREAKECIFIEPEKGRGSKGVYWYNKF.

Helical transmembrane passes span 54-74 (IIAY…PAPL) and 77-97 (LAWP…WVIG). The Histidine box-1 motif lies at 98–102 (HECGH). Residues 110–130 (WVDDTVGFILHSFLMTPYFSW) form a helical membrane-spanning segment. The Histidine box-2 signature appears at 134 to 138 (HRNHH). 3 helical membrane-spanning segments follow: residues 172 to 192 (LLIM…TNIS), 218 to 238 (VLLS…AVAA), and 242 to 262 (AWVT…FDII). The Histidine box-3 signature appears at 308–312 (HVMHH).

The protein belongs to the fatty acid desaturase type 1 family. It depends on Fe cation as a cofactor. Seed.

It is found in the membrane. The enzyme catalyses a (9Z,12Z)-octadecadienoyl-containing glycerolipid + 2 Fe(II)-[cytochrome b5] + O2 + 2 H(+) = a (9Z)-octadec-9-en-12-ynoyl-containing glycerolipid + 2 Fe(III)-[cytochrome b5] + 2 H2O. Its pathway is lipid metabolism; polyunsaturated fatty acid biosynthesis. Its function is as follows. Changes the delta-12 double bond of linoleic acid into a triple bond in the biosynthesis of crepenynic acid. This chain is Delta(12) fatty acid dehydrogenase, found in Crepis alpina (Hawksbeard).